Consider the following 154-residue polypeptide: Insulin-like peptide 1 (154 aa).

An N-terminal signal peptide occupies residues 1–29 (MFSQHNGAAVHGLRLQSLLIAAMLTAAMA). Intrachain disulfides connect cysteine 49–cysteine 138, cysteine 61–cysteine 151, and cysteine 137–cysteine 142. The disordered stretch occupies residues 72-92 (RESLLGNSDDDEDTEQEVQDD). The propeptide at 73–122 (ESLLGNSDDDEDTEQEVQDDSSMWQTLDGAGYSFSPLLTNLYGSEVLIKM) is connecting peptide. Residues 79–91 (SDDDEDTEQEVQD) are compositionally biased toward acidic residues.

The protein belongs to the insulin family. As to quaternary structure, heterodimer of a B chain and an A chain linked by two disulfide bonds.

The protein resides in the secreted. Its function is as follows. Possible ligand of InR/insulin-like receptor. The polypeptide is Insulin-like peptide 1 (Drosophila melanogaster (Fruit fly)).